The sequence spans 760 residues: Xaa-Pro dipeptidyl-peptidase (760 aa).

Catalysis depends on charge relay system residues serine 349, aspartate 469, and histidine 499.

Belongs to the peptidase S15 family. In terms of assembly, homodimer.

Its subcellular location is the cytoplasm. The catalysed reaction is Hydrolyzes Xaa-Pro-|- bonds to release unblocked, N-terminal dipeptides from substrates including Ala-Pro-|-p-nitroanilide and (sequentially) Tyr-Pro-|-Phe-Pro-|-Gly-Pro-|-Ile.. Removes N-terminal dipeptides sequentially from polypeptides having unsubstituted N-termini provided that the penultimate residue is proline. This is Xaa-Pro dipeptidyl-peptidase from Streptococcus pyogenes serotype M18 (strain MGAS8232).